A 555-amino-acid chain; its full sequence is Coiled-coil domain-containing protein 102A (555 aa).

Disordered regions lie at residues 1 to 68, 136 to 202, and 214 to 254; these read MSHG…ADGD, LAGA…GSQE, and PEEP…EEDA. Ser12, Ser26, and Ser28 each carry phosphoserine. Residues 37-61 are compositionally biased toward pro residues; it reads SLPPTPPSGTPSPGPPPALPLPPTP. Residues 72-161 adopt a coiled-coil conformation; it reads REELRLRELE…ARGRELARLR (90 aa). 2 stretches are compositionally biased toward basic and acidic residues: residues 136–159 and 166–183; these read LAGARRERQEAQGESEARGRELAR and GVDRTPDGPETEPEREQE. The span at 224–236 shows a compositional bias: low complexity; the sequence is RSAGAGAPRGSSG. Coiled-coil stretches lie at residues 268 to 401 and 432 to 522; these read QKVL…RRQT and KLKK…QNAP. The interval 478 to 555 is disordered; it reads ELDEAHNQAR…EDEDLQIQVA (78 aa). The span at 536–555 shows a compositional bias: acidic residues; sequence EAGDGASDLDEDEDLQIQVA. Residue Ser542 is modified to Phosphoserine.

In Bos taurus (Bovine), this protein is Coiled-coil domain-containing protein 102A (CCDC102A).